The following is a 421-amino-acid chain: ATP-dependent RNA helicase RhlB (421 aa).

Residues 9 to 37 (QKFSDFALHPKVVEALEKKGFHNCTPIQA) carry the Q motif motif. A Helicase ATP-binding domain is found at 40–219 (LPLTLAGRDV…FEQMNNAEYI (180 aa)). 53–60 (AQTGTGKT) is an ATP binding site. Positions 165 to 168 (DEAD) match the DEAD box motif. One can recognise a Helicase C-terminal domain in the interval 245-390 (RLLQTLIEEE…VSKYNPDALM (146 aa)). A disordered region spans residues 392 to 421 (DLPKPLRLTRPRTGNGPRRTGTPRNRRRSG). The segment covering 402-414 (PRTGNGPRRTGTP) has biased composition (low complexity).

Belongs to the DEAD box helicase family. RhlB subfamily. Component of the RNA degradosome, which is a multiprotein complex involved in RNA processing and mRNA degradation.

The protein resides in the cytoplasm. It carries out the reaction ATP + H2O = ADP + phosphate + H(+). Its function is as follows. DEAD-box RNA helicase involved in RNA degradation. Has RNA-dependent ATPase activity and unwinds double-stranded RNA. This is ATP-dependent RNA helicase RhlB from Escherichia coli O7:K1 (strain IAI39 / ExPEC).